Here is an 80-residue protein sequence, read N- to C-terminus: Exodeoxyribonuclease 7 small subunit (80 aa).

This sequence belongs to the XseB family. As to quaternary structure, heterooligomer composed of large and small subunits.

The protein localises to the cytoplasm. It carries out the reaction Exonucleolytic cleavage in either 5'- to 3'- or 3'- to 5'-direction to yield nucleoside 5'-phosphates.. Its function is as follows. Bidirectionally degrades single-stranded DNA into large acid-insoluble oligonucleotides, which are then degraded further into small acid-soluble oligonucleotides. The protein is Exodeoxyribonuclease 7 small subunit of Pseudomonas fluorescens (strain SBW25).